We begin with the raw amino-acid sequence, 661 residues long: Coagulation factor XIII B chain (661 aa).

The first 20 residues, 1–20 (MRLKNLTFIIILIISGELYA), serve as a signal peptide directing secretion. Sushi domains are found at residues 24–88 (PCGF…PRCF), 89–148 (KKCT…TCRK), 151–210 (ETCL…KCTK), 211–269 (LKCS…VCEG), 272–329 (NRCP…KCIE), 334–391 (VACE…ECVE), 394–452 (ENCK…VCLE), 453–516 (PCTV…PLCT), 522–580 (GMCT…LCLE), and 581–647 (PCTL…PRCI). Intrachain disulfides connect C25–C76, C59–C87, C91–C135, C118–C146, C153–C197, C180–C208, C213–C255, C241–C267, C274–C316, C302–C327, C336–C378, C364–C389, C396–C439, C425–C450, C454–C505, C486–C515, C524–C567, C553–C578, C582–C636, and C616–C646. N-linked (GlcNAc...) asparagine glycosylation is present at N162. The N-linked (GlcNAc...) asparagine glycan is linked to N545. Residues 617–619 (RGD) carry the Cell attachment site motif.

Tetramer of two A chains (F13A1) and two B (F13B) chains.

It localises to the secreted. In terms of biological role, the B chain of factor XIII is not catalytically active, but is thought to stabilize the A subunits and regulate the rate of transglutaminase formation by thrombin. This Homo sapiens (Human) protein is Coagulation factor XIII B chain (F13B).